Reading from the N-terminus, the 505-residue chain is Glutamate--tRNA ligase (505 aa).

Residues 12–22 carry the 'HIGH' region motif; the sequence is PSPTGALHIGG. The 'KMSKS' region motif lies at 260–264; that stretch reads KLSKR. Lysine 263 contributes to the ATP binding site.

It belongs to the class-I aminoacyl-tRNA synthetase family. Glutamate--tRNA ligase type 1 subfamily. Monomer.

It localises to the cytoplasm. The enzyme catalyses tRNA(Glu) + L-glutamate + ATP = L-glutamyl-tRNA(Glu) + AMP + diphosphate. Functionally, catalyzes the attachment of glutamate to tRNA(Glu) in a two-step reaction: glutamate is first activated by ATP to form Glu-AMP and then transferred to the acceptor end of tRNA(Glu). In Parabacteroides distasonis (strain ATCC 8503 / DSM 20701 / CIP 104284 / JCM 5825 / NCTC 11152), this protein is Glutamate--tRNA ligase.